Here is a 24-residue protein sequence, read N- to C-terminus: Chaperonin GroEL (24 aa).

The protein belongs to the chaperonin (HSP60) family. Forms a cylinder of 14 subunits composed of two heptameric rings stacked back-to-back. Interacts with the co-chaperonin GroES.

It localises to the cytoplasm. It carries out the reaction ATP + H2O + a folded polypeptide = ADP + phosphate + an unfolded polypeptide.. Together with its co-chaperonin GroES, plays an essential role in assisting protein folding. The GroEL-GroES system forms a nano-cage that allows encapsulation of the non-native substrate proteins and provides a physical environment optimized to promote and accelerate protein folding. The sequence is that of Chaperonin GroEL from Acinetobacter calcoaceticus.